A 443-amino-acid polypeptide reads, in one-letter code: Xaa-Pro dipeptidase (443 aa).

Positions 246, 257, 339, 384, and 423 each coordinate Mn(2+).

This sequence belongs to the peptidase M24B family. Bacterial-type prolidase subfamily. The cofactor is Mn(2+).

It carries out the reaction Xaa-L-Pro dipeptide + H2O = an L-alpha-amino acid + L-proline. Its function is as follows. Splits dipeptides with a prolyl residue in the C-terminal position. The chain is Xaa-Pro dipeptidase from Edwardsiella ictaluri (strain 93-146).